Consider the following 830-residue polypeptide: Lon protease (830 aa).

Residues 20-215 form the Lon N-terminal domain; the sequence is LPAVAIRDVV…LLIKILANEV (196 aa). 367–374 contributes to the ATP binding site; that stretch reads GPPGVGKT. The 180-residue stretch at 602–781 folds into the Lon proteolytic domain; that stretch reads ENGVGISTGL…DEIVKIAFEK (180 aa). Active-site residues include serine 687 and lysine 730. The interval 784–830 is disordered; that stretch reads PKSSFKKSKTAPKKESAKKAAKSKKPAVKKPAVKKTKQVKKTAKKKK. Residues 802–830 are compositionally biased toward basic residues; it reads KAAKSKKPAVKKPAVKKTKQVKKTAKKKK.

The protein belongs to the peptidase S16 family. In terms of assembly, homohexamer. Organized in a ring with a central cavity.

The protein localises to the cytoplasm. It catalyses the reaction Hydrolysis of proteins in presence of ATP.. In terms of biological role, ATP-dependent serine protease that mediates the selective degradation of mutant and abnormal proteins as well as certain short-lived regulatory proteins. Required for cellular homeostasis and for survival from DNA damage and developmental changes induced by stress. Degrades polypeptides processively to yield small peptide fragments that are 5 to 10 amino acids long. Binds to DNA in a double-stranded, site-specific manner. This Elusimicrobium minutum (strain Pei191) protein is Lon protease.